The sequence spans 264 residues: DNA-directed RNA polymerase subunit Rpo3 (264 aa).

Residues cysteine 203, cysteine 206, and cysteine 209 each coordinate [3Fe-4S] cluster.

The protein belongs to the archaeal Rpo3/eukaryotic RPB3 RNA polymerase subunit family. As to quaternary structure, part of the RNA polymerase complex. It depends on [3Fe-4S] cluster as a cofactor.

The protein localises to the cytoplasm. The enzyme catalyses RNA(n) + a ribonucleoside 5'-triphosphate = RNA(n+1) + diphosphate. DNA-dependent RNA polymerase (RNAP) catalyzes the transcription of DNA into RNA using the four ribonucleoside triphosphates as substrates. This chain is DNA-directed RNA polymerase subunit Rpo3, found in Archaeoglobus fulgidus (strain ATCC 49558 / DSM 4304 / JCM 9628 / NBRC 100126 / VC-16).